Here is a 245-residue protein sequence, read N- to C-terminus: Thiopurine S-methyltransferase (245 aa).

The residue at position 14 (Ser14) is a Phosphoserine. 29-40 (WQGKWVTGKTIF) contributes to the S-adenosyl-L-methionine binding site. Phe40 is a binding site for substrate. Residue Lys58 is modified to N6-acetyllysine. Leu69, Glu90, and Arg152 together coordinate S-adenosyl-L-methionine.

The protein belongs to the class I-like SAM-binding methyltransferase superfamily. TPMT family. Monomer.

It localises to the cytoplasm. It catalyses the reaction S-adenosyl-L-methionine + a thiopurine = S-adenosyl-L-homocysteine + a thiopurine S-methylether.. In Equus caballus (Horse), this protein is Thiopurine S-methyltransferase (TPMT).